A 198-amino-acid polypeptide reads, in one-letter code: dITP/XTP pyrophosphatase (198 aa).

Residue 7 to 12 participates in substrate binding; the sequence is TRNAGK. Mg(2+) contacts are provided by glutamate 40 and aspartate 69. Residue aspartate 69 is the Proton acceptor of the active site. Substrate-binding positions include serine 70, 152–155, lysine 175, and 180–181; these read FGYD and HR.

This sequence belongs to the HAM1 NTPase family. Homodimer. Mg(2+) is required as a cofactor.

The enzyme catalyses XTP + H2O = XMP + diphosphate + H(+). It catalyses the reaction dITP + H2O = dIMP + diphosphate + H(+). It carries out the reaction ITP + H2O = IMP + diphosphate + H(+). Pyrophosphatase that catalyzes the hydrolysis of nucleoside triphosphates to their monophosphate derivatives, with a high preference for the non-canonical purine nucleotides XTP (xanthosine triphosphate), dITP (deoxyinosine triphosphate) and ITP. Seems to function as a house-cleaning enzyme that removes non-canonical purine nucleotides from the nucleotide pool, thus preventing their incorporation into DNA/RNA and avoiding chromosomal lesions. This chain is dITP/XTP pyrophosphatase, found in Exiguobacterium sibiricum (strain DSM 17290 / CCUG 55495 / CIP 109462 / JCM 13490 / 255-15).